The following is a 202-amino-acid chain: Thymidylate kinase (202 aa).

13–20 (GTDGAGKS) serves as a coordination point for ATP.

Belongs to the thymidylate kinase family.

The enzyme catalyses dTMP + ATP = dTDP + ADP. Functionally, phosphorylation of dTMP to form dTDP in both de novo and salvage pathways of dTTP synthesis. In Desulfotalea psychrophila (strain LSv54 / DSM 12343), this protein is Thymidylate kinase.